The primary structure comprises 73 residues: Gene 30 protein (73 aa).

Positions 12 to 66 (LEKAINAVGGSQKVLAEKVGVTPQAINMLKKRGGSLPVTKMRKYEEVTGLPREVL) constitute an HTH cro/C1-type domain. The H-T-H motif DNA-binding region spans 23 to 42 (QKVLAEKVGVTPQAINMLKK).

The protein is Gene 30 protein (30) of Escherichia coli (Bacteriophage phi-80).